The following is a 355-amino-acid chain: Green-sensitive opsin-1 (355 aa).

Residues 1-49 (MAAHADEPVFAARRYNEETTRESAFVYTNANNTRDPFEGPNYHIAPRWV) lie on the Extracellular side of the membrane. An N-linked (GlcNAc...) asparagine glycan is attached at Asn31. A helical transmembrane segment spans residues 50 to 74 (YNLASLWMIIVVIASIFTNSLVIVA). Topologically, residues 75-86 (TAKFKKLRHPLN) are cytoplasmic. A helical membrane pass occupies residues 87-112 (WILVNLAIADLGETVLASTISVFNQV). The Extracellular segment spans residues 113–126 (FGYFVLGHPMCIFE). Cys123 and Cys200 are joined by a disulfide. The helical transmembrane segment at 127–146 (GWTVSVCGITALWSLTIISW) threads the bilayer. Residues 147 to 165 (ERWVVVCKPFGNVKFDGKW) are Cytoplasmic-facing. Residues 166–189 (AAGGIIFAWTWAIIWCTPPIFGWS) form a helical membrane-spanning segment. Over 190 to 215 (RYWPHGLKTSCGPDVFSGSEDPGVAS) the chain is Extracellular. A helical membrane pass occupies residues 216 to 243 (YMVTLLLTCCILPLSVIIICYIFVWNAI). At 244–265 (HQVAQQQKDSESTQKAEKEVSR) the chain is on the cytoplasmic side. The helical transmembrane segment at 266-289 (MVVVMILAFILCWGPYASFATFSA) threads the bilayer. Residues 290–297 (LNPGYAWH) are Extracellular-facing. A helical membrane pass occupies residues 298–322 (PLAAALPAYFAKSATIYNPIIYVFM). At Lys309 the chain carries N6-(retinylidene)lysine. At 323–355 (NRQFRSCIMQLFGKKVEDASEVSGSTTEVSTAS) the chain is on the cytoplasmic side.

It belongs to the G-protein coupled receptor 1 family. Opsin subfamily. The color pigments are found in the cone photoreceptor cells.

It localises to the membrane. Its function is as follows. Visual pigments are the light-absorbing molecules that mediate vision. They consist of an apoprotein, opsin, covalently linked to cis-retinal. In Psalidodon fasciatus (Banded astyanax), this protein is Green-sensitive opsin-1 (G103).